Here is a 261-residue protein sequence, read N- to C-terminus: uncharacterized protein (261 aa).

The segment at 1 to 22 (MGVADNEYISVPTGEPVQQQPQ) is disordered. The next 3 membrane-spanning stretches (helical) occupy residues 92-112 (IIILFFSQQFLLFSIAPILGL), 122-142 (IVVMHFLTAAFYYIFSVIFLF), and 147-167 (INTILLSILFSIIFTLSLMNY).

The protein resides in the membrane. This is an uncharacterized protein from Dictyostelium discoideum (Social amoeba).